Here is a 277-residue protein sequence, read N- to C-terminus: Cell wall protein PGA30 (277 aa).

Positions 1-18 (MKYFTIATVLTLASSALA) are cleaved as a signal peptide. 2 N-linked (GlcNAc...) asparagine glycosylation sites follow: Asn129 and Asn178. A disordered region spans residues 219 to 246 (VLPSSSTEAPPKTSVAAPSTTAEAQTTA). The segment covering 234 to 246 (AAPSTTAEAQTTA) has biased composition (polar residues). Gly253 carries GPI-anchor amidated glycine lipidation. A propeptide spans 254–277 (GANEIVGGGSMAIALAAAAIGLVI) (removed in mature form).

The protein belongs to the SRP1/TIP1 family. In terms of processing, the GPI-anchor is attached to the protein in the endoplasmic reticulum and serves to target the protein to the cell surface. There, the glucosamine-inositol phospholipid moiety is cleaved off and the GPI-modified mannoprotein is covalently attached via its lipidless GPI glycan remnant to the 1,6-beta-glucan of the outer cell wall layer.

It localises to the secreted. Its subcellular location is the cell wall. The protein localises to the membrane. Its function is as follows. Component of the cell wall involved in virulence which plays a role in the relationship between C.albicans and the host. This chain is Cell wall protein PGA30 (PGA30), found in Candida albicans (strain SC5314 / ATCC MYA-2876) (Yeast).